Reading from the N-terminus, the 336-residue chain is F420-dependent glucose-6-phosphate dehydrogenase (336 aa).

A coenzyme F420-(gamma-Glu)n-binding site is contributed by Asp-40. His-41 acts as the Proton donor in catalysis. Coenzyme F420-(gamma-Glu)n is bound by residues Thr-77 and 108-109 (TG). Glu-110 serves as the catalytic Proton acceptor. Coenzyme F420-(gamma-Glu)n contacts are provided by residues Asn-113, 176–177 (SG), and 179–180 (AA). Substrate-binding residues include Thr-194, Lys-197, Lys-258, and Arg-282.

Belongs to the F420-dependent glucose-6-phosphate dehydrogenase family. As to quaternary structure, homodimer.

The enzyme catalyses oxidized coenzyme F420-(gamma-L-Glu)(n) + D-glucose 6-phosphate + H(+) = 6-phospho-D-glucono-1,5-lactone + reduced coenzyme F420-(gamma-L-Glu)(n). In terms of biological role, catalyzes the coenzyme F420-dependent oxidation of glucose 6-phosphate (G6P) to 6-phosphogluconolactone. The polypeptide is F420-dependent glucose-6-phosphate dehydrogenase (Microbacterium testaceum (strain StLB037)).